The primary structure comprises 406 residues: DNA primase DnaG (406 aa).

The Toprim domain maps to 169–247; that stretch reads PNLIIVEGRA…KIDFVARAPI (79 aa). Mg(2+) is bound by residues Glu175, Asp220, and Asp222.

The protein belongs to the archaeal DnaG primase family. Forms a ternary complex with MCM helicase and DNA. Component of the archaeal exosome complex. Interacts with Csl4 but not with Rrp4. Mg(2+) serves as cofactor.

It carries out the reaction ssDNA + n NTP = ssDNA/pppN(pN)n-1 hybrid + (n-1) diphosphate.. Functionally, RNA polymerase that catalyzes the synthesis of short RNA molecules used as primers for DNA polymerase during DNA replication. Can use NTPs but not dNTPs. Binds DNA. Also part of the exosome, which is a complex involved in RNA degradation. Acts as a poly(A)-binding protein that enhances the interaction between heteromeric, adenine-rich transcripts and the exosome. The sequence is that of DNA primase DnaG from Saccharolobus solfataricus (strain ATCC 35092 / DSM 1617 / JCM 11322 / P2) (Sulfolobus solfataricus).